The sequence spans 319 residues: Thioredoxin reductase (319 aa).

37-44 (ERGVPGGQ) lines the FAD pocket. A disulfide bridge connects residues Cys136 and Cys139. 279–288 (DVRAKSLRQI) is an FAD binding site.

This sequence belongs to the class-II pyridine nucleotide-disulfide oxidoreductase family. Homodimer. It depends on FAD as a cofactor.

The protein resides in the cytoplasm. It carries out the reaction [thioredoxin]-dithiol + NADP(+) = [thioredoxin]-disulfide + NADPH + H(+). This is Thioredoxin reductase (trxB) from Listeria monocytogenes serovar 1/2a (strain ATCC BAA-679 / EGD-e).